Here is a 155-residue protein sequence, read N- to C-terminus: Aspartate carbamoyltransferase regulatory chain (155 aa).

Positions 113, 118, 141, and 144 each coordinate Zn(2+).

This sequence belongs to the PyrI family. As to quaternary structure, contains catalytic and regulatory chains. The cofactor is Zn(2+).

Involved in allosteric regulation of aspartate carbamoyltransferase. This chain is Aspartate carbamoyltransferase regulatory chain, found in Methanococcus aeolicus (strain ATCC BAA-1280 / DSM 17508 / OCM 812 / Nankai-3).